Reading from the N-terminus, the 141-residue chain is MAKKVVAVIKLALNAGKANPAPPVGPALGQHGVNIMMFCKEYNAKTADQAGMVIPVEISVFEDRSFTFVLKTPPASVLIRKAAKVEKGSNEPNKKKVGSITKAQLQEIAQTKLPDLNANDIDAAMKIVAGTAKNMGITVKD.

The protein belongs to the universal ribosomal protein uL11 family. In terms of assembly, part of the ribosomal stalk of the 50S ribosomal subunit. Interacts with L10 and the large rRNA to form the base of the stalk. L10 forms an elongated spine to which L12 dimers bind in a sequential fashion forming a multimeric L10(L12)X complex. In terms of processing, one or more lysine residues are methylated.

Forms part of the ribosomal stalk which helps the ribosome interact with GTP-bound translation factors. This chain is Large ribosomal subunit protein uL11, found in Nostoc punctiforme (strain ATCC 29133 / PCC 73102).